Reading from the N-terminus, the 67-residue chain is Nigrocin-2GRc (67 aa).

Residues Met-1 to Cys-22 form the signal peptide. The propeptide occupies Glu-23 to Arg-46. The cysteines at positions 61 and 67 are disulfide-linked.

As to expression, expressed by the skin glands.

The protein resides in the secreted. Functionally, antimicrobial peptide active at least against the Gram-positive bacterium S.aureus but with otherwise unclear activity spectrum. Lacks hemolytic activity against rabbit or human erythrocytes. In Odorrana grahami (Yunnanfu frog), this protein is Nigrocin-2GRc.